A 276-amino-acid chain; its full sequence is NADPH-dependent 7-cyano-7-deazaguanine reductase (276 aa).

83–85 is a substrate binding site; it reads IES. Residue 85 to 86 coordinates NADPH; it reads SK. Cysteine 184 (thioimide intermediate) is an active-site residue. Aspartate 191 acts as the Proton donor in catalysis. Residue 223–224 coordinates substrate; sequence HE. Position 252 to 253 (252 to 253) interacts with NADPH; it reads RG.

It belongs to the GTP cyclohydrolase I family. QueF type 2 subfamily. In terms of assembly, homodimer.

Its subcellular location is the cytoplasm. It catalyses the reaction 7-aminomethyl-7-carbaguanine + 2 NADP(+) = 7-cyano-7-deazaguanine + 2 NADPH + 3 H(+). It functions in the pathway tRNA modification; tRNA-queuosine biosynthesis. In terms of biological role, catalyzes the NADPH-dependent reduction of 7-cyano-7-deazaguanine (preQ0) to 7-aminomethyl-7-deazaguanine (preQ1). The chain is NADPH-dependent 7-cyano-7-deazaguanine reductase from Pseudomonas savastanoi pv. phaseolicola (strain 1448A / Race 6) (Pseudomonas syringae pv. phaseolicola (strain 1448A / Race 6)).